Reading from the N-terminus, the 1424-residue chain is MEDQGHLPSEPRALFDRRDDTDSTNTALDETDLSRTPLQDTSHTPHAEDWSLMPDLKKQHDRNVASGFRRRELGVTWKNLSVDVVSADAAINENVLSQFNIPQHIRESRNKAPLRTILHESHGCVKPGEMLLVLGRPGSGCTTLLRMLSNHRLGYKAIRGDVRFGSLTPEEASKYRGQIVMNTEEELFFPTLTVAQTLDFATRLKVPFNLPDGVTSPEAFRQETREFLLKSMGISHTSDTKVGNEYVRGVSGGERKRVSIIECLATRGSVFCWDNSTRGLDASTALEWAKAVRAMTDVFGLSSIVTLYQAGNGIYDLFDKVLVLDEGKQIYYGPMSQARPFMEEQGFVCREGSNVADFLTGVTVPTERKIRPGYENRFPRNADELLAAYEKSPIRAQMAIEYDYPDTESTRERTEEFKLGVLDEKAKRLSKNSPFTVDFLQQVKACIIRQYQIIWTDKATFAIKQISTVIQALVAGSLFYNAPDNSGGLFIKSGALFFSLLYNSLLAMSEVTDSFSGRPVLIKHKYFAFFHPAAFCIAQIAADIPVLLFQISMFAVVVYFMVGLTTSAGAFFSYWIIIFVATMVMTALFRAIGALFSTFDGASKVSGFLISALIMYCGYLEPYHAMHPWFIWIYWINPLAYAFDALLSIEFHNKIIPCVGNNLVPFGPGYDDTTFQSCAGVGGAVRGMTYVTGDQYLASLTYSYSHVWRNFGILWAWWALFVAVTIIATSRWKSAAEAGNSLLIPRETVAKHHAVVRKDEEAQLNEKAGHKGTGTDSEAQSNVDQHLVRNTSVFTWKNLTYTVKTPSGDRVLLDNVYGWVKPGMLGALMGSSGAGKTTLLDVLAQRKTDGTIRGSIMVDGRPLPVSFQRSAGYCEQLDVHEPFATVREALEFSALLRQPRHIPREEKLKYVDVIIDLLELHDLEHTLIGRVGAGLSVEQRKRVTIGVELVSKPSILIFLDEPTSGLDGQSAFNTVRFLRKLADVGQAVLVTIHQPSAQLFAEFDTLLLLAKGGKMVYFGDIGDNAQTVKDYFARYGAPCPANVNPAEHMIDVVSGHLSQGRDWNQVWLESPEHSSASRELDSIISEAASKPPGTVDDGYEFAMPLWEQTKIVTQRMSTSLYRNCDYIMNKIALHIGSALFNGFSFWMIGDSVADMQLKLFTIFNFIFVAPGVINQLQPLFIERRDIYDAREKKSKMYSWVAFVTALIVSEFPYLCVCAVLYFVCWYYTVGFPSDSDKAGAIFFIMLCYEFLYTGIGQFIAAYAPNATFAALTNPLILGTLVSFCGVLVPYAQIQAFWRYWIYWLNPFNYLMGSMLVFSVFDTDVKCKEGEFAVFDTPNGTTCADYLSTYLQGVGSRANLVNPEATSGCRVCQYRYGSDYLYTINLKDYYYGWRDTAIVCIFVLSSYALVYALMKLRTKASKKAE.

The tract at residues 1–49 (MEDQGHLPSEPRALFDRRDDTDSTNTALDETDLSRTPLQDTSHTPHAED) is disordered. Polar residues predominate over residues 23-42 (STNTALDETDLSRTPLQDTS). Asparagine 79 and asparagine 275 each carry an N-linked (GlcNAc...) asparagine glycan. Residues 96–351 (LSQFNIPQHI…MEEQGFVCRE (256 aa)) form the ABC transporter 1 domain. 7 helical membrane passes run 488–508 (GLFI…LLAM), 520–540 (VLIK…IAQI), 544–564 (IPVL…MVGL), 569–589 (GAFF…TALF), 605–625 (VSGF…PYHA), 629–649 (WFIW…LLSI), and 710–730 (NFGI…IATS). Residues 760–782 (EEAQLNEKAGHKGTGTDSEAQSN) form a disordered region. 2 N-linked (GlcNAc...) asparagine glycosylation sites follow: asparagine 790 and asparagine 798. One can recognise an ABC transporter 2 domain in the interval 794-1037 (FTWKNLTYTV…VKDYFARYGA (244 aa)). 830-837 (GSSGAGKT) serves as a coordination point for ATP. 4 helical membrane-spanning segments follow: residues 1131-1151 (IALH…IGDS), 1161-1181 (TIFN…PLFI), 1200-1220 (VAFV…CAVL), and 1240-1260 (AIFF…QFIA). N-linked (GlcNAc...) asparagine glycosylation occurs at asparagine 1265. The next 2 membrane-spanning stretches (helical) occupy residues 1268 to 1288 (FAAL…GVLV) and 1300 to 1320 (WIYW…FSVF). Asparagine 1338 carries N-linked (GlcNAc...) asparagine glycosylation. The helical transmembrane segment at 1395–1415 (TAIVCIFVLSSYALVYALMKL) threads the bilayer.

The protein belongs to the ABC transporter superfamily. ABCG family. PDR (TC 3.A.1.205) subfamily.

The protein resides in the cell membrane. Its activity is regulated as follows. The efflux inhibitor FK506 impairs the transport activity. In terms of biological role, ABC efflux transporter that is able to transport rhodamine 6G (R-6G), a known substrate for many ABC transporters, but seems not to transport azoles. The chain is ABC multidrug transporter H from Aspergillus fumigatus (strain ATCC MYA-4609 / CBS 101355 / FGSC A1100 / Af293) (Neosartorya fumigata).